The sequence spans 250 residues: Methionine aminopeptidase (250 aa).

Residue His-77 coordinates substrate. A divalent metal cation contacts are provided by Asp-95, Asp-106, and His-169. Substrate is bound at residue His-176. A divalent metal cation is bound by residues Glu-202 and Glu-233.

It belongs to the peptidase M24A family. Methionine aminopeptidase type 1 subfamily. Monomer. Co(2+) is required as a cofactor. It depends on Zn(2+) as a cofactor. The cofactor is Mn(2+). Fe(2+) serves as cofactor.

It catalyses the reaction Release of N-terminal amino acids, preferentially methionine, from peptides and arylamides.. Functionally, removes the N-terminal methionine from nascent proteins. The N-terminal methionine is often cleaved when the second residue in the primary sequence is small and uncharged (Met-Ala-, Cys, Gly, Pro, Ser, Thr, or Val). Requires deformylation of the N(alpha)-formylated initiator methionine before it can be hydrolyzed. This Clostridium acetobutylicum (strain ATCC 824 / DSM 792 / JCM 1419 / IAM 19013 / LMG 5710 / NBRC 13948 / NRRL B-527 / VKM B-1787 / 2291 / W) protein is Methionine aminopeptidase.